The primary structure comprises 122 residues: UPF0102 protein MUL_2060 (122 aa).

It belongs to the UPF0102 family.

The protein is UPF0102 protein MUL_2060 of Mycobacterium ulcerans (strain Agy99).